We begin with the raw amino-acid sequence, 239 residues long: DUP240 protein DFP3 (239 aa).

The Cytoplasmic segment spans residues 1 to 54; that stretch reads MQPHLDNNSNNDDVKLDTLGEQNVLSSAENITLPEDTFKSYMTYLLYEMAHYKP. Residues 55-75 traverse the membrane as a helical segment; sequence MIFSFLALSVSILIVVIFHNV. At 76–79 the chain is on the extracellular side; sequence KACD. Residues 80–104 form a helical membrane-spanning segment; sequence VVFGFSIFVTSILFLSTLIPFNVYI. Over 105-239 the chain is Cytoplasmic; sequence SDEGFRIKLL…RKQYPDADIP (135 aa).

This sequence belongs to the DUP/COS family. As to quaternary structure, interacts according to large scale protein interaction studies with MEC3 and ULP1.

It localises to the membrane. The sequence is that of DUP240 protein DFP3 from Saccharomyces cerevisiae (strain ATCC 204508 / S288c) (Baker's yeast).